The following is a 329-amino-acid chain: DNA repair and recombination protein RadA (329 aa).

ATP is bound at residue 107–114 (GEFGSGKS).

The protein belongs to the eukaryotic RecA-like protein family.

Its function is as follows. Involved in DNA repair and in homologous recombination. Binds and assemble on single-stranded DNA to form a nucleoprotein filament. Hydrolyzes ATP in a ssDNA-dependent manner and promotes DNA strand exchange between homologous DNA molecules. The chain is DNA repair and recombination protein RadA from Methanocorpusculum labreanum (strain ATCC 43576 / DSM 4855 / Z).